Consider the following 242-residue polypeptide: Type III pantothenate kinase (242 aa).

6 to 13 (DAGNTRIK) lines the ATP pocket. Substrate contacts are provided by residues tyrosine 90 and 97-100 (GADR). Aspartate 99 (proton acceptor) is an active-site residue. Residue threonine 122 coordinates ATP. Substrate is bound at residue threonine 172.

This sequence belongs to the type III pantothenate kinase family. In terms of assembly, homodimer. The cofactor is NH4(+). K(+) serves as cofactor.

The protein localises to the cytoplasm. The enzyme catalyses (R)-pantothenate + ATP = (R)-4'-phosphopantothenate + ADP + H(+). It participates in cofactor biosynthesis; coenzyme A biosynthesis; CoA from (R)-pantothenate: step 1/5. Functionally, catalyzes the phosphorylation of pantothenate (Pan), the first step in CoA biosynthesis. The chain is Type III pantothenate kinase from Aromatoleum aromaticum (strain DSM 19018 / LMG 30748 / EbN1) (Azoarcus sp. (strain EbN1)).